Consider the following 255-residue polypeptide: Probable transcriptional regulatory protein Rcas_0718 (255 aa).

It belongs to the TACO1 family.

It localises to the cytoplasm. The chain is Probable transcriptional regulatory protein Rcas_0718 from Roseiflexus castenholzii (strain DSM 13941 / HLO8).